The following is a 320-amino-acid chain: Mycothiol acetyltransferase (320 aa).

2 N-acetyltransferase domains span residues 16–141 (RQVR…RSLR) and 152–320 (LQIR…AALA). Position 36 (glutamate 36) interacts with 1D-myo-inositol 2-(L-cysteinylamino)-2-deoxy-alpha-D-glucopyranoside. Acetyl-CoA-binding positions include 80-82 (LVV) and 88-93 (RRGIAT). 3 residues coordinate 1D-myo-inositol 2-(L-cysteinylamino)-2-deoxy-alpha-D-glucopyranoside: glutamate 179, lysine 229, and glutamate 239. Acetyl-CoA contacts are provided by residues 243 to 245 (LGV) and 250 to 256 (QGRGLGR). Tyrosine 284 is a binding site for 1D-myo-inositol 2-(L-cysteinylamino)-2-deoxy-alpha-D-glucopyranoside. Acetyl-CoA is bound at residue 289-294 (NIAAVR).

The protein belongs to the acetyltransferase family. MshD subfamily. In terms of assembly, monomer.

The catalysed reaction is 1D-myo-inositol 2-(L-cysteinylamino)-2-deoxy-alpha-D-glucopyranoside + acetyl-CoA = mycothiol + CoA + H(+). In terms of biological role, catalyzes the transfer of acetyl from acetyl-CoA to desacetylmycothiol (Cys-GlcN-Ins) to form mycothiol. This is Mycothiol acetyltransferase from Mycobacterium marinum (strain ATCC BAA-535 / M).